The primary structure comprises 2197 residues: Protein Ycf2 (2197 aa).

Position 1539 to 1546 (1539 to 1546 (GSIGTGRS)) interacts with ATP.

The protein belongs to the Ycf2 family.

The protein localises to the plastid. It is found in the chloroplast stroma. Probable ATPase of unknown function. Its presence in a non-photosynthetic plant (Epifagus virginiana) and experiments in tobacco indicate that it has an essential function which is probably not related to photosynthesis. The protein is Protein Ycf2 of Ipomoea purpurea (Common morning glory).